Here is a 149-residue protein sequence, read N- to C-terminus: D-aminoacyl-tRNA deacylase (149 aa).

The Gly-cisPro motif, important for rejection of L-amino acids motif lies at 137-138 (GP).

It belongs to the DTD family. Homodimer.

It is found in the cytoplasm. The enzyme catalyses glycyl-tRNA(Ala) + H2O = tRNA(Ala) + glycine + H(+). It catalyses the reaction a D-aminoacyl-tRNA + H2O = a tRNA + a D-alpha-amino acid + H(+). Functionally, an aminoacyl-tRNA editing enzyme that deacylates mischarged D-aminoacyl-tRNAs. Also deacylates mischarged glycyl-tRNA(Ala), protecting cells against glycine mischarging by AlaRS. Acts via tRNA-based rather than protein-based catalysis; rejects L-amino acids rather than detecting D-amino acids in the active site. By recycling D-aminoacyl-tRNA to D-amino acids and free tRNA molecules, this enzyme counteracts the toxicity associated with the formation of D-aminoacyl-tRNA entities in vivo and helps enforce protein L-homochirality. The protein is D-aminoacyl-tRNA deacylase of Koribacter versatilis (strain Ellin345).